We begin with the raw amino-acid sequence, 35 residues long: Small toxic polypeptide LdrD (35 aa).

The helical transmembrane segment at 10-32 (FWHDLAAPVIAGILASMIVNWLN) threads the bilayer.

This sequence belongs to the Ldr toxic peptide family.

It is found in the cell inner membrane. Functionally, toxic component of a type I toxin-antitoxin (TA) system. Overexpression causes rapid cell killing and nucleoid condensation of the host cell. Overexpression induces stress-response and a number of membrane protein genes. May inhibit ATP synthesis due to its insertion in the cell inner membrane. The chain is Small toxic polypeptide LdrD (ldrD) from Escherichia coli (strain K12).